The chain runs to 179 residues: Large ribosomal subunit protein uL6 (179 aa).

It belongs to the universal ribosomal protein uL6 family. In terms of assembly, part of the 50S ribosomal subunit.

Its function is as follows. This protein binds to the 23S rRNA, and is important in its secondary structure. It is located near the subunit interface in the base of the L7/L12 stalk, and near the tRNA binding site of the peptidyltransferase center. This is Large ribosomal subunit protein uL6 from Trichodesmium erythraeum (strain IMS101).